The chain runs to 511 residues: Maturase K (511 aa).

Belongs to the intron maturase 2 family. MatK subfamily.

The protein localises to the plastid. Its subcellular location is the chloroplast. In terms of biological role, usually encoded in the trnK tRNA gene intron. Probably assists in splicing its own and other chloroplast group II introns. This Campsis radicans (Trumpet creeper) protein is Maturase K.